Reading from the N-terminus, the 138-residue chain is MAGVRLVFTKAFMVTVLLTLLLNIGVKPAEGQFSACSFSSRPHPRGICGSDLADLRAFICSRRNQPAMVKRDAETGWLLPETMVKRNAQTDLDDPLRNIKLSSESALTYLTKRQRTTNLVCECCYNVCTVDVFYEYCY.

The N-terminal stretch at 1–31 (MAGVRLVFTKAFMVTVLLTLLLNIGVKPAEG) is a signal peptide. Gln-32 carries the pyrrolidone carboxylic acid modification. 3 disulfide bridges follow: Cys-48-Cys-124, Cys-60-Cys-137, and Cys-123-Cys-128. Positions 72-84 (DAETGWLLPETMV) are cleaved as a propeptide — C-beta peptide like. Residues 87–111 (NAQTDLDDPLRNIKLSSESALTYLT) constitute a propeptide, C-alpha peptide like. At Gln-114 the chain carries Pyrrolidone carboxylic acid.

This sequence belongs to the insulin family. Heterodimer of a B chain and an A chain linked by two disulfide bonds. Expressed in the cerebral light-green cells which are giant neuroendocrines cells involved in the control of growth.

Its subcellular location is the cytoplasmic vesicle. It is found in the secretory vesicle. The chain is Molluscan insulin-related peptide 5 from Lymnaea stagnalis (Great pond snail).